The primary structure comprises 176 residues: Large ribosomal subunit protein bL17 (176 aa).

The segment at Ala124–Glu176 is disordered. The span at Ala145 to Glu176 shows a compositional bias: low complexity.

Belongs to the bacterial ribosomal protein bL17 family. In terms of assembly, part of the 50S ribosomal subunit. Contacts protein L32.

The chain is Large ribosomal subunit protein bL17 from Chlorobium phaeovibrioides (strain DSM 265 / 1930) (Prosthecochloris vibrioformis (strain DSM 265)).